A 518-amino-acid polypeptide reads, in one-letter code: Phosphoacetylglucosamine mutase 1 (518 aa).

Thr-49 is modified (phosphothreonine). Ser-51 functions as the Phosphoserine intermediate in the catalytic mechanism. Residues Ser-51, Asp-267, Asp-269, and Asp-271 each contribute to the Mg(2+) site. Phosphoserine is present on Ser-51. Substrate contacts are provided by residues 360–362 (EAN), 486–490 (RASGT), and Arg-495.

Belongs to the phosphohexose mutase family. Requires Mg(2+) as cofactor.

It is found in the cytoplasm. The protein localises to the nucleus. The enzyme catalyses N-acetyl-alpha-D-glucosamine 1-phosphate = N-acetyl-D-glucosamine 6-phosphate. It functions in the pathway nucleotide-sugar biosynthesis; UDP-N-acetyl-alpha-D-glucosamine biosynthesis; N-acetyl-alpha-D-glucosamine 1-phosphate from alpha-D-glucosamine 6-phosphate (route I): step 2/2. Its function is as follows. Catalyzes the conversion of GlcNAc-6-P into GlcNAc-1-P during the synthesis of uridine diphosphate/UDP-GlcNAc, which is a biosynthetic precursor of chitin and also supplies the amino sugars for N-linked oligosaccharides of glycoproteins. In Schizosaccharomyces pombe (strain 972 / ATCC 24843) (Fission yeast), this protein is Phosphoacetylglucosamine mutase 1.